Reading from the N-terminus, the 932-residue chain is Protocadherin gamma-A6 (932 aa).

A signal peptide spans 1 to 29; that stretch reads MAPPQRHPQRSEQVLLLTLLGTLWGAAAA. 6 Cadherin domains span residues 30-133, 134-242, 243-347, 348-452, 453-562, and 570-682; these read QIRY…TPRF, LKEE…TPMF, TQPV…VPEV, VVTS…PPTF, PHSS…APEI, and DGST…EPSA. Residues 30 to 692 are Extracellular-facing; sequence QIRYSIPEEL…KPNDSDLTLY (663 aa). N-linked (GlcNAc...) asparagine glycosylation is present at Asn-81. N-linked (GlcNAc...) asparagine glycosylation is found at Asn-419 and Asn-545. An N-linked (GlcNAc...) asparagine glycan is attached at Asn-685. Residues 693–713 form a helical membrane-spanning segment; that stretch reads LVVAVAAVSCVFLAFVIVLLA. The Cytoplasmic portion of the chain corresponds to 714–932; it reads LRLQRWHKSR…KKKSGKKEKK (219 aa). Disordered stretches follow at residues 804–841 and 902–932; these read PRQL…WPNN and ATLT…KEKK. Residues 806–841 are compositionally biased toward polar residues; sequence QLQQAPPNTDWRFSQAQRPGTSGSQNGDDTGTWPNN. The span at 922-932 shows a compositional bias: basic residues; the sequence is NKKKSGKKEKK.

It localises to the cell membrane. Functionally, potential calcium-dependent cell-adhesion protein. May be involved in the establishment and maintenance of specific neuronal connections in the brain. The polypeptide is Protocadherin gamma-A6 (PCDHGA6) (Homo sapiens (Human)).